An 83-amino-acid polypeptide reads, in one-letter code: Small ribosomal subunit protein bS18 (83 aa).

Belongs to the bacterial ribosomal protein bS18 family. Part of the 30S ribosomal subunit. Forms a tight heterodimer with protein bS6.

Functionally, binds as a heterodimer with protein bS6 to the central domain of the 16S rRNA, where it helps stabilize the platform of the 30S subunit. The sequence is that of Small ribosomal subunit protein bS18 from Methylobacterium radiotolerans (strain ATCC 27329 / DSM 1819 / JCM 2831 / NBRC 15690 / NCIMB 10815 / 0-1).